The following is a 313-amino-acid chain: MSQSRHRAEAPPLEREDSGTFSLGKMITAKPGKTPIQVLHEYGMKTKNIPVYECERSDVQIHVPTFTFRVTVGDITCTGEGTSKKLAKHRAAEAAINILKANASICFAVPDPLMPDPSKQPKNQLNPIGSLQELAIHHGWRLPEYTLSQEGGPAHKREYTTICRLESFMETGKGASKKQAKRNAAEKFLAKFSNISPENHISLTNVVGHSLGCTWHSLRNSPGEKINLLKRSLLSIPNTDYIQLLSEIAKEQGFNITYLDIDELSANGQYQCLAELSTSPITVCHGSGISCGNAQSDAAHNALQYLKIIAERK.

Positions 1-18 (MSQSRHRAEAPPLEREDS) are enriched in basic and acidic residues. Residues 1–21 (MSQSRHRAEAPPLEREDSGTF) are disordered. Sufficient for self-association and interaction with TARBP2 regions lie at residues 1-103 (MSQS…KANA), 102-195 (NASI…FSNI), and 195-313 (ISPE…AERK). Ser18 is modified (phosphoserine). 3 DRBM domains span residues 34–101 (TPIQ…ILKA), 126–194 (NPIG…KFSN), and 240–308 (DYIQ…YLKI). A phosphoserine mark is found at Ser167, Ser246, and Ser287.

It belongs to the PRKRA family. As to quaternary structure, homodimer. Interacts with EIF2AK2/PKR through its DRBM domains. Interacts with DICER1, AGO2 and TARBP2. Also able to interact with dsRNA. Interacts with UBC9. Forms a complex with UBC9 and p53/TP53. Interacts with DUS2L (via DRBM domain). Interacts with RIGI. (Microbial infection) Interacts with ebolavirus protein VP35; this interaction inhibits the interaction between RIGI and PRKRA. In addition, this interaction disrupts the interaction between VP35 and the viral polymerase L. So the VP35-PRKRA interaction plays a critical role in determining the outcome of ebolavirus infection. The interaction PRKRA-VP35 also prevents PRKRA binding to DICER1 and thus allows the virus to counteract host RNA silencing. In terms of assembly, (Microbial infection) Interacts with human herpesvirus 8 protein MTA/ORF57; this interaction inhibits stress granule formation. Phosphorylated at Ser-246 in unstressed cells and at Ser-287 in stressed cells. Phosphorylation at Ser-246 appears to be a prerequisite for subsequent phosphorylation at Ser-287. Phosphorylation at Ser-246 and Ser-287 are necessary for activation of EIF2AK2/PKR under conditions of stress.

The protein resides in the cytoplasm. It localises to the perinuclear region. Activates EIF2AK2/PKR in the absence of double-stranded RNA (dsRNA), leading to phosphorylation of EIF2S1/EFI2-alpha and inhibition of translation and induction of apoptosis. Required for siRNA production by DICER1 and for subsequent siRNA-mediated post-transcriptional gene silencing. Does not seem to be required for processing of pre-miRNA to miRNA by DICER1. Promotes UBC9-p53/TP53 association and sumoylation and phosphorylation of p53/TP53 at 'Lys-386' at 'Ser-392' respectively and enhances its activity in a EIF2AK2/PKR-dependent manner. This Homo sapiens (Human) protein is Interferon-inducible double-stranded RNA-dependent protein kinase activator A (PRKRA).